A 337-amino-acid chain; its full sequence is Anthraniloyl-CoA anthraniloyltransferase (337 aa).

2 residues coordinate anthraniloyl-CoA: Thr-29 and Phe-33. Cys-113 (acyl-thioester intermediate) is an active-site residue. Residues 154–155, 221–224, and His-258 each bind anthraniloyl-CoA; these read RN and MRGR.

Belongs to the thiolase-like superfamily. FabH family. In terms of assembly, homodimer.

It localises to the cytoplasm. The catalysed reaction is anthraniloyl-CoA + malonyl-CoA + H(+) = (2-aminobenzoyl)acetyl-CoA + CO2 + CoA. Required for the biosynthesis of a number of signaling molecules, such as the quinolone signal 2-heptyl-3-hydroxy-4(1H)-quinolone (PQS), 2-heptyl-4-hydroxyquinoline (HHQ) and 2,4-dihydroxyquinoline (DHQ). These molecules are required for normal biofilm formation. Catalyzes the transfer of the anthraniloyl moiety from anthraniloyl-CoA to malonyl-CoA to form 2-aminobenzoylacetyl-CoA. The first step of the reaction is the formation of a covalent anthraniloyl-PqsD intermediate. Next, the short-lived intermediate 3-(2-aminophenyl)-3-oxopropanoyl-CoA is formed. An intramolecular rearrangement of this intermediate can give rise to 2,4-dihydroxyquinoline (DHQ). The chain is Anthraniloyl-CoA anthraniloyltransferase (pqsD) from Pseudomonas aeruginosa (strain ATCC 15692 / DSM 22644 / CIP 104116 / JCM 14847 / LMG 12228 / 1C / PRS 101 / PAO1).